A 243-amino-acid polypeptide reads, in one-letter code: Terpene cyclase penB (243 aa).

The next 3 helical transmembrane spans lie at 19 to 39, 48 to 68, and 78 to 98; these read IANI…VGMI, YGMA…YSLI, and GVFI…IKFA. N-linked (GlcNAc...) asparagine glycosylation is present at Asn-111. 4 helical membrane passes run 112 to 132, 137 to 157, 172 to 194, and 205 to 225; these read LSLI…ALAA, SLAY…GGLC, LWLS…WMYW, and LVLW…LCYW.

It belongs to the paxB family.

It is found in the membrane. It participates in secondary metabolite biosynthesis. Functionally, terpene cyclase; part of the gene cluster that mediates the biosynthesis of the indole diterpenes penitrems. The geranylgeranyl diphosphate (GGPP) synthase penG catalyzes the first step in penitrem biosynthesis via conversion of farnesyl pyrophosphate and isopentyl pyrophosphate into geranylgeranyl pyrophosphate (GGPP). Condensation of indole-3-glycerol phosphate with GGPP by the prenyl transferase penC then forms 3-geranylgeranylindole (3-GGI). Epoxidation by the FAD-dependent monooxygenase penM leads to a epoxidized-GGI that is substrate of the terpene cyclase penB for cyclization to yield paspaline. Paspaline is subsequently converted to 13-desoxypaxilline by the cytochrome P450 monooxygenase penP, the latter being then converted to paxilline by the cytochrome P450 monooxygenase penQ. Paxilline is converted to beta-paxitriol via C-10 ketoreduction by the short-chain dehydrogenase PC-15 which can be monoprenylated at the C-20 by the indole diterpene prenyltransferase penD. A two-step elimination (acetylation and elimination) process performed by the O-acetyltransferase PC-16 and the P.simplicissimum ptmI-ortholog not yet identified in P.crustosum, leads to the production of the prenylated form of penijanthine. The FAD-linked oxidoreductase ptmO then converts the prenylated form of penijanthine into PC-M5 which is in turn transformed into PC-M4 by the aromatic dimethylallyltransferase PC-22. A series of oxidation steps involving 4 cytochrome P450 monooxygenases (PC-21, PC-05, PC-23, PC-20) and a FAD-dependent monooxygenase (PC-14) are required for the transformation of PC-M4 to penitrems A and E. Synthesis of these final products is proposed to proceed via penitrems D and C (PC-21, PC-05, PC-14) and penitrems B and F (PC-21, PC-05, PC-14, PC-23). This is Terpene cyclase penB (penB) from Penicillium crustosum (Blue mold fungus).